A 43-amino-acid chain; its full sequence is Seed non-specific lipid transfer protein-like (43 aa).

Belongs to the plant LTP family. In terms of assembly, homodimer.

Its function is as follows. Plant non-specific lipid-transfer proteins transfer phospholipids as well as galactolipids across membranes. May play a role in wax or cutin deposition in the cell walls of expanding epidermal cells and certain secretory tissues. This isoform inhibits the hyphal growth of several fungi in vitro. In Raphanus sativus (Radish), this protein is Seed non-specific lipid transfer protein-like.